A 497-amino-acid polypeptide reads, in one-letter code: Probable malate:quinone oxidoreductase (497 aa).

This sequence belongs to the MQO family. It depends on FAD as a cofactor.

The catalysed reaction is (S)-malate + a quinone = a quinol + oxaloacetate. It functions in the pathway carbohydrate metabolism; tricarboxylic acid cycle; oxaloacetate from (S)-malate (quinone route): step 1/1. The sequence is that of Probable malate:quinone oxidoreductase from Hahella chejuensis (strain KCTC 2396).